The chain runs to 216 residues: Phosphatidylserine decarboxylase proenzyme (216 aa).

S185 serves as the catalytic Schiff-base intermediate with substrate; via pyruvic acid. S185 carries the post-translational modification Pyruvic acid (Ser); by autocatalysis.

It belongs to the phosphatidylserine decarboxylase family. PSD-A subfamily. Heterodimer of a large membrane-associated beta subunit and a small pyruvoyl-containing alpha subunit. It depends on pyruvate as a cofactor. Is synthesized initially as an inactive proenzyme. Formation of the active enzyme involves a self-maturation process in which the active site pyruvoyl group is generated from an internal serine residue via an autocatalytic post-translational modification. Two non-identical subunits are generated from the proenzyme in this reaction, and the pyruvate is formed at the N-terminus of the alpha chain, which is derived from the carboxyl end of the proenzyme. The post-translation cleavage follows an unusual pathway, termed non-hydrolytic serinolysis, in which the side chain hydroxyl group of the serine supplies its oxygen atom to form the C-terminus of the beta chain, while the remainder of the serine residue undergoes an oxidative deamination to produce ammonia and the pyruvoyl prosthetic group on the alpha chain.

It localises to the cell membrane. The enzyme catalyses a 1,2-diacyl-sn-glycero-3-phospho-L-serine + H(+) = a 1,2-diacyl-sn-glycero-3-phosphoethanolamine + CO2. It participates in phospholipid metabolism; phosphatidylethanolamine biosynthesis; phosphatidylethanolamine from CDP-diacylglycerol: step 2/2. In terms of biological role, catalyzes the formation of phosphatidylethanolamine (PtdEtn) from phosphatidylserine (PtdSer). This chain is Phosphatidylserine decarboxylase proenzyme, found in Nitrosomonas eutropha (strain DSM 101675 / C91 / Nm57).